Reading from the N-terminus, the 287-residue chain is Shikimate dehydrogenase (NADP(+)) (287 aa).

Residues 20-22 and Thr67 contribute to the shikimate site; that span reads SRS. Catalysis depends on Lys71, which acts as the Proton acceptor. Glu84 provides a ligand contact to NADP(+). Positions 93 and 108 each coordinate shikimate. NADP(+)-binding positions include 132–136, 156–161, and Met226; these read GAGGA and NRTAAR. Tyr228 contributes to the shikimate binding site. NADP(+) is bound at residue Gly250.

Belongs to the shikimate dehydrogenase family. In terms of assembly, homodimer.

It carries out the reaction shikimate + NADP(+) = 3-dehydroshikimate + NADPH + H(+). It participates in metabolic intermediate biosynthesis; chorismate biosynthesis; chorismate from D-erythrose 4-phosphate and phosphoenolpyruvate: step 4/7. In terms of biological role, involved in the biosynthesis of the chorismate, which leads to the biosynthesis of aromatic amino acids. Catalyzes the reversible NADPH linked reduction of 3-dehydroshikimate (DHSA) to yield shikimate (SA). The sequence is that of Shikimate dehydrogenase (NADP(+)) from Bordetella pertussis (strain Tohama I / ATCC BAA-589 / NCTC 13251).